Consider the following 1040-residue polypeptide: Multidrug resistance protein MdtB (1040 aa).

The next 12 membrane-spanning stretches (helical) occupy residues 25 to 45, 347 to 367, 369 to 389, 396 to 416, 440 to 460, 472 to 492, 537 to 557, 863 to 883, 888 to 908, 910 to 930, 968 to 988, and 998 to 1018; these read LLMA…PVAA, LMLA…NIPA, IIPG…MVFL, LTLM…IVVI, IGFT…PLLF, FAVT…TLTP, WLTL…WIVI, LGST…VLGV, FIHP…ALLA, IIAG…LIGI, ILMT…STGV, and IAMV…TPVI.

Belongs to the resistance-nodulation-cell division (RND) (TC 2.A.6) family. MdtB subfamily. In terms of assembly, part of a tripartite efflux system composed of MdtA, MdtB and MdtC. MdtB forms a heteromultimer with MdtC.

It localises to the cell inner membrane. The protein is Multidrug resistance protein MdtB of Salmonella choleraesuis (strain SC-B67).